A 67-amino-acid polypeptide reads, in one-letter code: MARITVEDCLNQVPNRFKLTLAATYRARELAQGHAPRIDSKDKPTVTALREIAGGHTGLEMLRKVPT.

Belongs to the RNA polymerase subunit omega family. As to quaternary structure, the RNAP catalytic core consists of 2 alpha, 1 beta, 1 beta' and 1 omega subunit. When a sigma factor is associated with the core the holoenzyme is formed, which can initiate transcription.

The enzyme catalyses RNA(n) + a ribonucleoside 5'-triphosphate = RNA(n+1) + diphosphate. Promotes RNA polymerase assembly. Latches the N- and C-terminal regions of the beta' subunit thereby facilitating its interaction with the beta and alpha subunits. The sequence is that of DNA-directed RNA polymerase subunit omega from Bordetella petrii (strain ATCC BAA-461 / DSM 12804 / CCUG 43448).